The following is a 110-amino-acid chain: Phosphoribosyl-ATP pyrophosphatase (110 aa).

Belongs to the PRA-PH family.

It is found in the cytoplasm. The catalysed reaction is 1-(5-phospho-beta-D-ribosyl)-ATP + H2O = 1-(5-phospho-beta-D-ribosyl)-5'-AMP + diphosphate + H(+). Its pathway is amino-acid biosynthesis; L-histidine biosynthesis; L-histidine from 5-phospho-alpha-D-ribose 1-diphosphate: step 2/9. In Lacticaseibacillus casei (strain BL23) (Lactobacillus casei), this protein is Phosphoribosyl-ATP pyrophosphatase.